A 272-amino-acid chain; its full sequence is MTSQELTEQILKKQSFLCVGLDTDLDKIPTYLLSEKDPVFSFNKAIIDATHQYCVAYKPNIAFYEAIGVDGWKALKKTIEYLHAEYPDLYTIADAKRGDIGNTSRMYAKAFFEDLGFDSITVAPYMGKDSVEPFLEFTNKHTILLALTSNEGAFDFQTLKTGDKELYKKVIETSKNWQNSENLMYVVGATKAEYLAEIRKIIPENFLLVPGVGAQGGSLEEVCKYGMTKNVGLLINSSRKIIYASDSSNFAEIAGAKAEAMQNQMASELEKL.

Lys-96 (proton donor) is an active-site residue.

Belongs to the OMP decarboxylase family. Type 2 subfamily.

The enzyme catalyses orotidine 5'-phosphate + H(+) = UMP + CO2. Its pathway is pyrimidine metabolism; UMP biosynthesis via de novo pathway; UMP from orotate: step 2/2. The sequence is that of Orotidine 5'-phosphate decarboxylase from Christiangramia forsetii (strain DSM 17595 / CGMCC 1.15422 / KT0803) (Gramella forsetii).